A 341-amino-acid chain; its full sequence is MMMIIDCHGHYTVLPKAHDEWREQQKAAFKAGQPAPPYPEISDDEIRETIEANQLRLIKERGADMTIFSPRASAMAPHVGDQSVAVPWAQACNNLIARVVDLFPETFAGVCMLPQSPEADMTSSIAELERCVNELGFIGCNLNPDPGGGHFKHPPLTDRFWYPFYEKMVELDVPAMIHVSGSCNPAMHATGAYYLAADTIAFMQLLQGNLFADFPTLRFIIPHGGGAVPYHWGRFRGLADMLKQPSLDTLLMNNVFFDTCVYHQPGINLLADVIDNKNILFGSEMVGAVRGIDPTTGHYFDDTKRYIDALDISDQERHAIFEGNTRRVFPRLDAKLKARGL.

Residues histidine 8 and histidine 10 each coordinate Zn(2+). 71 to 73 (RAS) is a binding site for substrate. Histidine 178 is a Zn(2+) binding site. Substrate-binding residues include tyrosine 194 and histidine 223. The active-site Proton donor/acceptor is glutamate 284. Arginine 290 contributes to the substrate binding site.

It belongs to the metallo-dependent hydrolases superfamily. As to quaternary structure, homodimer. It depends on Zn(2+) as a cofactor.

It catalyses the reaction (3Z)-2-oxo-4-carboxy-3-hexenedioate + H2O = (2S)-2-hydroxy-4-oxobutane-1,2,4-tricarboxylate. It participates in secondary metabolite metabolism; lignin degradation. In terms of biological role, contributes to the degradation of lignin at the level of the protocatechuate 4,5-cleavage pathway. Catalyzes the hydration of the double bond of (3Z)-2-keto-4-carboxy-3-hexenedioate (KCH) to (4S)-4-carboxy-4-hydroxy-2-oxoadipate (CHA, also named (2S)-2-hydroxy-4-oxobutane-1,2,4-tricarboxylate). Is involved in the catabolism of both vanillate and syringate. The chain is 2-keto-4-carboxy-3-hexenedioate hydratase from Sphingobium sp. (strain NBRC 103272 / SYK-6).